Consider the following 159-residue polypeptide: Transcription antitermination protein NusB (159 aa).

Positions 1-20 are disordered; it reads MNKNTQGKPSGKPVRRDGVD.

Belongs to the NusB family.

In terms of biological role, involved in transcription antitermination. Required for transcription of ribosomal RNA (rRNA) genes. Binds specifically to the boxA antiterminator sequence of the ribosomal RNA (rrn) operons. This Stenotrophomonas maltophilia (strain R551-3) protein is Transcription antitermination protein NusB.